The following is a 385-amino-acid chain: Ethanolamine kinase 2 (385 aa).

The protein belongs to the choline/ethanolamine kinase family.

The catalysed reaction is ethanolamine + ATP = phosphoethanolamine + ADP + H(+). The protein operates within phospholipid metabolism; phosphatidylethanolamine biosynthesis; phosphatidylethanolamine from ethanolamine: step 1/3. Functionally, highly specific for ethanolamine phosphorylation. Does not have choline kinase activity. This chain is Ethanolamine kinase 2 (Etnk2), found in Rattus norvegicus (Rat).